A 115-amino-acid chain; its full sequence is uncharacterized protein (115 aa).

3 helical membrane passes run 23–43 (LVYAALAFVGGFAVWFSLFFA), 63–83 (AMVTMWIGVGAVLLLTLVVMV), and 90–110 (NVVIGWPFVGLLALGLVYVAA).

It is found in the cell membrane. This is an uncharacterized protein from Mycobacterium bovis (strain ATCC BAA-935 / AF2122/97).